Here is a 236-residue protein sequence, read N- to C-terminus: Rho-related GTP-binding protein RhoV (236 aa).

The disordered stretch occupies residues 1 to 27 (MPPRELSEAEPPPLPASTPPPRRRSAP). The segment covering 10-20 (EPPPLPASTPP) has biased composition (pro residues). Serine 25 carries the phosphoserine modification. GTP-binding positions include 38–45 (GDGAVGKS), 85–89 (DTAGQ), and 143–146 (TQAD). A lipid anchor (S-palmitoyl cysteine) is attached at cysteine 234.

The protein belongs to the small GTPase superfamily. Rho family. Interacts with PAK2. Mg(2+) serves as cofactor.

The protein localises to the cell membrane. It is found in the endosome membrane. Functionally, plays a role in the control of the actin cytoskeleton via activation of the JNK pathway. The polypeptide is Rho-related GTP-binding protein RhoV (Mus musculus (Mouse)).